The chain runs to 468 residues: H(+)/Cl(-) exchange transporter ClcA (468 aa).

Over 1–30 (MSTRETFKISLLAKMPKDVINQFLSKDKTP) the chain is Cytoplasmic. Residues 31–67 (FSVLFLSLLVGILAGLVGTYFEQAVHLVSETRTDWLK) traverse the membrane as a helical segment. Topologically, residues 68–74 (SEIGSFL) are periplasmic. The helical transmembrane segment at 75-98 (PLWLAAFLISAFLAFIGYFLVHRF) threads the bilayer. The Selectivity filter part_1 motif lies at 104 to 108 (GSGIP). Serine 105 is a binding site for chloride. The segment at residues 107–114 (IPEIEGAM) is an intramembrane region (helical). Topologically, residues 115–121 (DGMRPVR) are cytoplasmic. The next 2 helical transmembrane spans lie at 122–139 (WWRVLPVKFFGGMGALGS) and 146–164 (EGPTVQMGGAVGRMISDIF). The Selectivity filter part_2 motif lies at 144-148 (GREGP). The Cytoplasmic portion of the chain corresponds to 165–174 (RVKNEDTRHS). 2 intramembrane regions (helical) span residues 175-187 (LLAAGAAGGLAAA) and 191-199 (PLAGIMFVI). Over 200–212 (EEMRPQFRYTLIS) the chain is Cytoplasmic. The helical transmembrane segment at 213 to 230 (VRAVIISAVAANIVFRVI) threads the bilayer. The Periplasmic segment spans residues 231–250 (NGQDAVITMPQYDAPELSTL). The chain crosses the membrane as a helical span at residues 251 to 279 (GLFLLLGALFGVFGVLFNYLITLAQDLFV). Residues 280–285 (KFHRND) are Cytoplasmic-facing. Residues 286-307 (RKRYLLTGSMIGGCFGLLLLYV) form a helical membrane-spanning segment. Residues 308–327 (PELTGGGISLIPTITNGGYG) lie on the Periplasmic side of the membrane. A run of 2 helical transmembrane segments spans residues 328–347 (AGILLLLFVGRIFTTLLCFG) and 353–374 (GIFAPMLALGTLFGYAFGLIAK). Positions 353 to 357 (GIFAP) match the Selectivity filter part_3 motif. Residues isoleucine 354 and phenylalanine 355 each coordinate chloride. The Periplasmic portion of the chain corresponds to 375–384 (MWFPELNIEP). An intramembrane region (helical) is located at residues 385–399 (GMFAIAGMGALFAAT). An intramembrane region (note=Loop between two helices) is located at residues 400–402 (VRA). An intramembrane region (helical) is located at residues 403–414 (PITGILLVIEMT). Residues 415-419 (NNYHL) constitute an intramembrane region (note=Loop between two helices). The helical transmembrane segment at 420 to 436 (ILPLIITSLGAVIFAQL) threads the bilayer. Residues 437-468 (LGGQPIYSQLLHRTLKNQKLQQQDLPPQSPNS) lie on the Cytoplasmic side of the membrane. Tyrosine 443 contacts chloride.

It belongs to the chloride channel (TC 2.A.49) family. ClcA subfamily. In terms of assembly, homodimer.

The protein localises to the cell inner membrane. It catalyses the reaction 2 chloride(in) + H(+)(out) = 2 chloride(out) + H(+)(in). Proton-coupled chloride transporter. Functions as antiport system and exchanges two chloride ions for 1 proton. Probably acts as an electrical shunt for an outwardly-directed proton pump that is linked to amino acid decarboxylation, as part of the extreme acid resistance (XAR) response. The chain is H(+)/Cl(-) exchange transporter ClcA from Vibrio cholerae serotype O1 (strain ATCC 39315 / El Tor Inaba N16961).